Consider the following 185-residue polypeptide: Small ribosomal subunit protein uS4 (185 aa).

Residues 107–179 enclose the S4 RNA-binding domain; sequence RRLQTLVYRK…NGRRKRKNNH (73 aa). The segment at 161–185 is disordered; sequence NTPLTNPEINGRRKRKNNHAGKEDN.

It belongs to the universal ribosomal protein uS4 family.

The chain is Small ribosomal subunit protein uS4 from Entamoeba histolytica (strain ATCC 30459 / HM-1:IMSS / ABRM).